The chain runs to 395 residues: Argininosuccinate synthase (395 aa).

8–16 contacts ATP; the sequence is AYSGGLDTS. Residues Tyr86 and Ser91 each contribute to the L-citrulline site. Gly116 contacts ATP. Positions 118, 122, and 123 each coordinate L-aspartate. Position 122 (Asn122) interacts with L-citrulline. Arg126, Ser172, Ser181, Glu257, and Tyr269 together coordinate L-citrulline.

It belongs to the argininosuccinate synthase family. Type 1 subfamily. As to quaternary structure, homotetramer.

It localises to the cytoplasm. It carries out the reaction L-citrulline + L-aspartate + ATP = 2-(N(omega)-L-arginino)succinate + AMP + diphosphate + H(+). It participates in amino-acid biosynthesis; L-arginine biosynthesis; L-arginine from L-ornithine and carbamoyl phosphate: step 2/3. The protein is Argininosuccinate synthase of Methanosarcina barkeri (strain Fusaro / DSM 804).